The following is an 895-amino-acid chain: Endochitinase 2 (895 aa).

A signal peptide spans 1–22 (MGLTNILAAFIAVSSLFIQSLA). A GH18 domain is found at 29-340 (SNLAVYWGQG…DIMKEVLLRC (312 aa)). N-linked (GlcNAc...) asparagine glycosylation is present at asparagine 90. Glutamate 175 serves as the catalytic Proton donor. The interval 343–712 (DPPTSTVTST…APSSSTTEDR (370 aa)) is disordered. Over residues 346-425 (TSTVTSTISA…ISTRSASTET (80 aa)) the composition is skewed to low complexity. Positions 426–478 (VTTRSQEPPSTTISTRPASTETVTTRSQEPPSSTISTRSASTETVTTRSQEPP) are enriched in polar residues. Over residues 479–505 (SSTISTRSASTETSTSSQDSPSTTIST) the composition is skewed to low complexity. Positions 506 to 543 (KSAPTGTVTTRSQDLPSTTISTRSPETETETVTTKSQD) are enriched in polar residues. Over residues 544 to 555 (SPSITLSTRSSS) the composition is skewed to low complexity. Residues 556–577 (AETVSTRSQHSSSTTISTKSAP) are compositionally biased toward polar residues. A compositionally biased stretch (low complexity) spans 578 to 589 (TETGTTSEHSTS). Over residues 590–657 (MPVSTRSAST…ISTELPSQTH (68 aa)) the composition is skewed to polar residues. Composition is skewed to low complexity over residues 658–692 (STTD…APTT) and 699–712 (TLTL…TEDR). A lipid anchor (GPI-anchor amidated glycine) is attached at glycine 866. A propeptide spans 867 to 895 (GAMTVRSMDVVAKALITAGAAVLGLFLGL) (removed in mature form).

It belongs to the glycosyl hydrolase 18 family. Chitinase class III subfamily.

It localises to the cell membrane. It carries out the reaction Random endo-hydrolysis of N-acetyl-beta-D-glucosaminide (1-&gt;4)-beta-linkages in chitin and chitodextrins.. May be associated with endosporulation. This is Endochitinase 2 (CTS2) from Coccidioides immitis (strain RS) (Valley fever fungus).